The following is a 423-amino-acid chain: UDP-N-acetylglucosamine 1-carboxyvinyltransferase (423 aa).

Phosphoenolpyruvate is bound at residue K22–N23. A UDP-N-acetyl-alpha-D-glucosamine-binding site is contributed by R93. C117 acts as the Proton donor in catalysis. C117 is modified (2-(S-cysteinyl)pyruvic acid O-phosphothioketal). UDP-N-acetyl-alpha-D-glucosamine is bound by residues R122–L126, D308, and I330.

This sequence belongs to the EPSP synthase family. MurA subfamily.

The protein localises to the cytoplasm. It catalyses the reaction phosphoenolpyruvate + UDP-N-acetyl-alpha-D-glucosamine = UDP-N-acetyl-3-O-(1-carboxyvinyl)-alpha-D-glucosamine + phosphate. The protein operates within cell wall biogenesis; peptidoglycan biosynthesis. Functionally, cell wall formation. Adds enolpyruvyl to UDP-N-acetylglucosamine. In Maricaulis maris (strain MCS10) (Caulobacter maris), this protein is UDP-N-acetylglucosamine 1-carboxyvinyltransferase.